We begin with the raw amino-acid sequence, 453 residues long: RuvB-like helicase 1 (453 aa).

Residue G71–T78 coordinates ATP.

It belongs to the RuvB family. May form heterododecamers with RVB2. Component of the SWR1 chromatin remodeling complex, the INO80 chromatin remodeling complex, and of the R2TP complex.

The protein localises to the nucleus. The catalysed reaction is ATP + H2O = ADP + phosphate + H(+). Its function is as follows. DNA helicase which participates in several chromatin remodeling complexes, including the SWR1 and the INO80 complexes. The SWR1 complex mediates the ATP-dependent exchange of histone H2A for the H2A variant HZT1 leading to transcriptional regulation of selected genes by chromatin remodeling. The INO80 complex remodels chromatin by shifting nucleosomes and is involved in DNA repair. Also involved in pre-rRNA processing. In Yarrowia lipolytica (strain CLIB 122 / E 150) (Yeast), this protein is RuvB-like helicase 1 (RVB1).